Consider the following 585-residue polypeptide: Arginine--tRNA ligase (585 aa).

Residues 127–137 carry the 'HIGH' region motif; that stretch reads PNTNKPLHVGH.

This sequence belongs to the class-I aminoacyl-tRNA synthetase family. In terms of assembly, monomer.

The protein resides in the cytoplasm. The enzyme catalyses tRNA(Arg) + L-arginine + ATP = L-arginyl-tRNA(Arg) + AMP + diphosphate. This Borrelia duttonii (strain Ly) protein is Arginine--tRNA ligase.